We begin with the raw amino-acid sequence, 179 residues long: Probable protein archease (179 aa).

Residues Asp55, Asp178, and Val179 each coordinate Ca(2+).

It belongs to the archease family.

Activates the tRNA-splicing ligase complex by facilitating the enzymatic turnover of catalytic subunit RtcB. Acts by promoting the guanylylation of RtcB, a key intermediate step in tRNA ligation. Can also alter the NTP specificity of RtcB such that ATP, dGTP or ITP is used efficiently. The polypeptide is Probable protein archease (Mycobacterium tuberculosis (strain CDC 1551 / Oshkosh)).